We begin with the raw amino-acid sequence, 227 residues long: tRNA (guanine-N(1)-)-methyltransferase (227 aa).

S-adenosyl-L-methionine-binding positions include glycine 112 and 131-136 (LGDFVL).

This sequence belongs to the RNA methyltransferase TrmD family. As to quaternary structure, homodimer.

The protein localises to the cytoplasm. It catalyses the reaction guanosine(37) in tRNA + S-adenosyl-L-methionine = N(1)-methylguanosine(37) in tRNA + S-adenosyl-L-homocysteine + H(+). Functionally, specifically methylates guanosine-37 in various tRNAs. The sequence is that of tRNA (guanine-N(1)-)-methyltransferase from Trichodesmium erythraeum (strain IMS101).